The primary structure comprises 246 residues: Orotidine 5'-phosphate decarboxylase (246 aa).

Substrate is bound by residues Asp-22, Lys-44, 71–80 (DLKYHDIPHT), Thr-130, Arg-191, Gln-201, Gly-221, and Arg-222. Lys-73 serves as the catalytic Proton donor.

Belongs to the OMP decarboxylase family. Type 1 subfamily. In terms of assembly, homodimer.

It carries out the reaction orotidine 5'-phosphate + H(+) = UMP + CO2. The protein operates within pyrimidine metabolism; UMP biosynthesis via de novo pathway; UMP from orotate: step 2/2. Its function is as follows. Catalyzes the decarboxylation of orotidine 5'-monophosphate (OMP) to uridine 5'-monophosphate (UMP). The sequence is that of Orotidine 5'-phosphate decarboxylase from Neisseria gonorrhoeae (strain ATCC 700825 / FA 1090).